A 682-amino-acid chain; its full sequence is Methionine--tRNA ligase (682 aa).

The 'HIGH' region motif lies at 14–24 (PYANGSIHLGH). Positions 145, 148, 158, and 161 each coordinate Zn(2+). Residues 331-335 (KMSKS) carry the 'KMSKS' region motif. Residue lysine 334 coordinates ATP. One can recognise a tRNA-binding domain in the interval 580–682 (AFAAIDLRVA…SGARPGQRIK (103 aa)).

The protein belongs to the class-I aminoacyl-tRNA synthetase family. MetG type 1 subfamily. As to quaternary structure, homodimer. The cofactor is Zn(2+).

It localises to the cytoplasm. It carries out the reaction tRNA(Met) + L-methionine + ATP = L-methionyl-tRNA(Met) + AMP + diphosphate. Functionally, is required not only for elongation of protein synthesis but also for the initiation of all mRNA translation through initiator tRNA(fMet) aminoacylation. This chain is Methionine--tRNA ligase, found in Pseudomonas syringae pv. syringae (strain B728a).